The sequence spans 322 residues: Putative integrase ORF3 (322 aa).

Positions 153-322 (RGKLTDFKSI…SSKEMFLQNI (170 aa)) constitute an Integrase catalytic domain.

Belongs to the plectrovirus integrase ORF3 family.

Functionally, this protein may encode an integrase, which is necessary for integration of the viral DNA into host genome. The chain is Putative integrase ORF3 from Spiroplasma virus SpV1-R8A2 B (SpV1).